The sequence spans 181 residues: MSETRMAQNMDTTDEQYLRLIELLSNYDSTLEQLQKGFQDGYIQLSRSNYYNKDSLRGNYGEDYWDETYIGQLMATVEEKNSKVVVEIVKRKAQDKQEKKEEEDNKLTQRKKGTKPEKQKTQSHKLKQDYDPILMFGGVLSVPSSLRQSQTSFKGCIPLIAQLINYKNEILTLVETLSEQE.

Ser2 is modified (N-acetylalanine). 2 stretches are compositionally biased toward basic and acidic residues: residues 93–107 (AQDK…DNKL) and 114–125 (TKPEKQKTQSHK). A disordered region spans residues 93-125 (AQDKQEKKEEEDNKLTQRKKGTKPEKQKTQSHK).

Its function is as follows. Required for V-ATPase activity. In Saccharomyces cerevisiae (strain ATCC 204508 / S288c) (Baker's yeast), this protein is Vacuolar ATPase assembly protein VMA22 (VMA22).